The sequence spans 944 residues: Putative ATP-dependent RNA helicase (944 aa).

Residues 66 to 235 (TTPRSPIDGI…VPLHNLLMKL (170 aa)) form the Helicase ATP-binding domain. Residue 79–86 (HGVGTGKT) coordinates ATP. Residues 183–186 (DEAH) carry the DEAH box motif. The 73-residue stretch at 451–523 (CLTREVMTVP…QIIGRGIRYQ (73 aa)) folds into the Helicase C-terminal domain.

The protein belongs to the DEAD box helicase family. DEAH subfamily.

The enzyme catalyses ATP + H2O = ADP + phosphate + H(+). This is Putative ATP-dependent RNA helicase from Heliothis virescens ascovirus 3e (HvAV-3e).